The following is a 500-amino-acid chain: Aspartyl/glutamyl-tRNA(Asn/Gln) amidotransferase subunit B (500 aa).

Belongs to the GatB/GatE family. GatB subfamily. As to quaternary structure, heterotrimer of A, B and C subunits.

The catalysed reaction is L-glutamyl-tRNA(Gln) + L-glutamine + ATP + H2O = L-glutaminyl-tRNA(Gln) + L-glutamate + ADP + phosphate + H(+). The enzyme catalyses L-aspartyl-tRNA(Asn) + L-glutamine + ATP + H2O = L-asparaginyl-tRNA(Asn) + L-glutamate + ADP + phosphate + 2 H(+). Its function is as follows. Allows the formation of correctly charged Asn-tRNA(Asn) or Gln-tRNA(Gln) through the transamidation of misacylated Asp-tRNA(Asn) or Glu-tRNA(Gln) in organisms which lack either or both of asparaginyl-tRNA or glutaminyl-tRNA synthetases. The reaction takes place in the presence of glutamine and ATP through an activated phospho-Asp-tRNA(Asn) or phospho-Glu-tRNA(Gln). This is Aspartyl/glutamyl-tRNA(Asn/Gln) amidotransferase subunit B from Brucella melitensis biotype 2 (strain ATCC 23457).